A 137-amino-acid chain; its full sequence is Glutamate mutase sigma subunit (137 aa).

The 135-residue stretch at E3–M137 folds into the B12-binding domain. Adenosylcob(III)alamin is bound by residues A13–A17, H16, S61–L63, and N93–G97.

The protein belongs to the methylaspartate mutase GlmS subunit family. In terms of assembly, heterotetramer composed of 2 epsilon subunits (GlmE) and 2 sigma subunits (GlmS). GlmE exists as a homodimer and GlmS as a monomer. The cofactor is adenosylcob(III)alamin.

The enzyme catalyses (2S,3S)-3-methyl-L-aspartate = L-glutamate. It participates in amino-acid degradation; L-glutamate degradation via mesaconate pathway; acetate and pyruvate from L-glutamate: step 1/4. Catalyzes the carbon skeleton rearrangement of L-glutamate to L-threo-3-methylaspartate ((2S,3S)-3-methylaspartate). This is Glutamate mutase sigma subunit from Carboxydothermus hydrogenoformans (strain ATCC BAA-161 / DSM 6008 / Z-2901).